Here is a 336-residue protein sequence, read N- to C-terminus: Probable G-protein coupled receptor 82 (336 aa).

At 1-11 (MNNNTTCIQPS) the chain is on the extracellular side. Residues Asn3 and Asn4 are each glycosylated (N-linked (GlcNAc...) asparagine). Residues 12–32 (MISSMALPIIYILLCIVGVFG) traverse the membrane as a helical segment. Residues 33–55 (NTLSQWIFLTKIGKKTSTHIYLS) lie on the Cytoplasmic side of the membrane. Residues 56–76 (HLVTANLLVCSAMPFMSIYFL) traverse the membrane as a helical segment. Topologically, residues 77-92 (KGFQWEYQSAQCRVVN) are extracellular. A helical membrane pass occupies residues 93 to 115 (FLGTLSMHASMFVSLLILSWIAI). At 116–156 (SRYATLMQKDSSQETTSCYEKIFYGHLLKKFRQPNFARKLC) the chain is on the cytoplasmic side. The helical transmembrane segment at 157–177 (IYIWGVVLGIIIPVTVYYSVI) threads the bilayer. The Extracellular portion of the chain corresponds to 178–197 (EATEGEESLCYNRQMELGAM). Residues 198–218 (ISQIAGLIGTTFIGFSFLVVL) form a helical membrane-spanning segment. Residues 219–251 (TSYYSFVSHLRKIRTCTSIMEKDLTYSSVKRHL) lie on the Cytoplasmic side of the membrane. Residues 252–272 (LVIQILLIVCFLPYSIFKPIF) traverse the membrane as a helical segment. Over 273–336 (YVLHQRDNCQ…SNSAHMQSYG (64 aa)) the chain is Extracellular.

This sequence belongs to the G-protein coupled receptor 1 family.

Its subcellular location is the cell membrane. In terms of biological role, orphan receptor. This Homo sapiens (Human) protein is Probable G-protein coupled receptor 82 (GPR82).